A 326-amino-acid chain; its full sequence is Ribose operon repressor (326 aa).

Positions 1–56 (MATIKDVAGAAGVSVATVSRNLNDNGYVHEETRTRVIAAMAKLNYYPNEVARSLYK) constitute an HTH lacI-type domain. Residues 4–23 (IKDVAGAAGVSVATVSRNLN) constitute a DNA-binding region (H-T-H motif).

Transcriptional repressor for the ribose rbsDACBK operon. The protein is Ribose operon repressor (rbsR) of Bacillus subtilis (strain 168).